A 679-amino-acid polypeptide reads, in one-letter code: Methionine--tRNA ligase (679 aa).

The short motif at 14-24 is the 'HIGH' region element; that stretch reads PYANGSIHLGH. Zn(2+) contacts are provided by Cys-145, Cys-148, Cys-158, and Cys-161. The 'KMSKS' region motif lies at 331–335; sequence KMSKS. Lys-334 contributes to the ATP binding site. One can recognise a tRNA-binding domain in the interval 577 to 679; the sequence is TFAAVDLRIA…NGAKPGQRVM (103 aa).

Belongs to the class-I aminoacyl-tRNA synthetase family. MetG type 1 subfamily. In terms of assembly, homodimer. The cofactor is Zn(2+).

It localises to the cytoplasm. The catalysed reaction is tRNA(Met) + L-methionine + ATP = L-methionyl-tRNA(Met) + AMP + diphosphate. In terms of biological role, is required not only for elongation of protein synthesis but also for the initiation of all mRNA translation through initiator tRNA(fMet) aminoacylation. The protein is Methionine--tRNA ligase of Stutzerimonas stutzeri (strain A1501) (Pseudomonas stutzeri).